The primary structure comprises 926 residues: Protein Niban 1 (926 aa).

G2 is lipidated: N-myristoyl glycine. S578, S581, S595, S601, and S640 each carry phosphoserine. Disordered regions lie at residues 604 to 699 (LPGA…VPGS) and 719 to 889 (VEND…EQVN). Positions 661–672 (VENTAGPLSSHL) are enriched in polar residues. S699 bears the Phosphoserine mark. The span at 733–745 (NIKEEESKIHPEA) shows a compositional bias: basic and acidic residues. A Phosphoserine modification is found at S755. The segment covering 756–767 (CEEREVREKEAQ) has biased composition (basic and acidic residues). Positions 784-797 (GRGSTSQSTSGGLT) are enriched in low complexity. Residues 840 to 854 (VTVTPQEDATLSSNP) are compositionally biased toward polar residues. A Phosphoserine modification is found at S923.

The protein belongs to the Niban family.

The protein resides in the cytoplasm. The protein localises to the membrane. Functionally, regulates phosphorylation of a number of proteins involved in translation regulation including EIF2A, EIF4EBP1 and RPS6KB1. May be involved in the endoplasmic reticulum stress response. The polypeptide is Protein Niban 1 (Mus musculus (Mouse)).